Here is a 145-residue protein sequence, read N- to C-terminus: uncharacterized protein (145 aa).

Met-1 bears the N-acetylmethionine mark. Residues 15–41 (QLKNNSGGTNGDRNSGANNGGGENSAP) form a disordered region. Residues 16–27 (LKNNSGGTNGDR) show a composition bias toward polar residues. Residues Ser-121 and Ser-126 each carry the phosphoserine modification. The tract at residues 125–145 (NSFDKQNAKNDDDEDDDDFFD) is disordered. Residues 135-145 (DDDEDDDDFFD) show a composition bias toward acidic residues.

It belongs to the PDCD5 family.

This is an uncharacterized protein from Saccharomyces cerevisiae (strain ATCC 204508 / S288c) (Baker's yeast).